The primary structure comprises 78 residues: Serine--glyoxylate aminotransferase (78 aa).

It belongs to the class-V pyridoxal-phosphate-dependent aminotransferase family. Homodimer. The cofactor is pyridoxal 5'-phosphate. Expressed in leaves but not in root tissue or seedlings.

The protein localises to the peroxisome. The catalysed reaction is glyoxylate + L-serine = 3-hydroxypyruvate + glycine. It carries out the reaction glyoxylate + L-alanine = glycine + pyruvate. With respect to regulation, inhibited by aminooxyacetate. The sequence is that of Serine--glyoxylate aminotransferase from Triticum aestivum (Wheat).